The chain runs to 312 residues: Olfactory receptor 1493 (312 aa).

At 1-23 (MNNKTVITHFLLLGLPIPPEHQQ) the chain is on the extracellular side. The N-linked (GlcNAc...) asparagine glycan is linked to Asn-3. A helical transmembrane segment spans residues 24-48 (LFFALFLIMYLTTFLGNLLIVVLVQ). The Cytoplasmic segment spans residues 49 to 55 (LDSHLHT). Residues 56 to 77 (PMYLFLSNLSFSDLCFSSVTML) form a helical membrane-spanning segment. Residues 78–98 (KLLQNIQSQVPSISYAGCLTQ) lie on the Extracellular side of the membrane. A disulfide bridge links Cys-95 with Cys-187. The chain crosses the membrane as a helical span at residues 99 to 118 (IFFFLLFGYLGNFLLVAMAY). Residues 119–137 (DRYVAICFPLHYTNIMSHK) lie on the Cytoplasmic side of the membrane. The chain crosses the membrane as a helical span at residues 138 to 156 (LCTCLLLVFWIMTSSHAMM). Residues 157–194 (HTLLAARLSFCENNVLLNFFCDLFVLLKLACSDTYVNE) lie on the Extracellular side of the membrane. Residues 195-217 (LMIHIMGVIIIVIPFVLIVISYA) form a helical membrane-spanning segment. At 218 to 234 (KIISSILKVPSTQSIHK) the chain is on the cytoplasmic side. Residues 235–258 (VFSTCGSHLSVVSLFYGTIIGLYL) traverse the membrane as a helical segment. Over 259 to 270 (CPSGDNFSLKGS) the chain is Extracellular. A helical membrane pass occupies residues 271–290 (AMAMMYTVVTPMLNPFIYSL). The Cytoplasmic segment spans residues 291–312 (RNRDMKQALIRVTCSKKISLPW).

Belongs to the G-protein coupled receptor 1 family. As to expression, olfactory epithelium.

It is found in the cell membrane. Odorant receptor. The sequence is that of Olfactory receptor 1493 (Olr1493) from Rattus norvegicus (Rat).